The chain runs to 300 residues: Bifunctional protein FolD (300 aa).

NADP(+) is bound by residues 172-174, Ser206, and Ile247; that span reads GRS.

Belongs to the tetrahydrofolate dehydrogenase/cyclohydrolase family. Homodimer.

It catalyses the reaction (6R)-5,10-methylene-5,6,7,8-tetrahydrofolate + NADP(+) = (6R)-5,10-methenyltetrahydrofolate + NADPH. The catalysed reaction is (6R)-5,10-methenyltetrahydrofolate + H2O = (6R)-10-formyltetrahydrofolate + H(+). The protein operates within one-carbon metabolism; tetrahydrofolate interconversion. Catalyzes the oxidation of 5,10-methylenetetrahydrofolate to 5,10-methenyltetrahydrofolate and then the hydrolysis of 5,10-methenyltetrahydrofolate to 10-formyltetrahydrofolate. The polypeptide is Bifunctional protein FolD (Rhodopirellula baltica (strain DSM 10527 / NCIMB 13988 / SH1)).